The sequence spans 147 residues: Small ribosomal subunit protein uS12 (147 aa).

Belongs to the universal ribosomal protein uS12 family. As to quaternary structure, part of the 30S ribosomal subunit.

In terms of biological role, with S4 and S5 plays an important role in translational accuracy. Located at the interface of the 30S and 50S subunits. This Thermofilum pendens (strain DSM 2475 / Hrk 5) protein is Small ribosomal subunit protein uS12.